The chain runs to 488 residues: Bifunctional protein HldE (488 aa).

Residues 1-331 form a ribokinase region; it reads MTELSALVER…VALHREDLTL (331 aa). 206–209 contributes to the ATP binding site; that stretch reads NRKE. Asp276 is a catalytic residue. Residues 358–488 are cytidylyltransferase; the sequence is FTNGCFDLLH…TNTIKKMNGN (131 aa).

The protein in the N-terminal section; belongs to the carbohydrate kinase PfkB family. This sequence in the C-terminal section; belongs to the cytidylyltransferase family. As to quaternary structure, homodimer.

The catalysed reaction is D-glycero-beta-D-manno-heptose 7-phosphate + ATP = D-glycero-beta-D-manno-heptose 1,7-bisphosphate + ADP + H(+). It carries out the reaction D-glycero-beta-D-manno-heptose 1-phosphate + ATP + H(+) = ADP-D-glycero-beta-D-manno-heptose + diphosphate. It functions in the pathway nucleotide-sugar biosynthesis; ADP-L-glycero-beta-D-manno-heptose biosynthesis; ADP-L-glycero-beta-D-manno-heptose from D-glycero-beta-D-manno-heptose 7-phosphate: step 1/4. The protein operates within nucleotide-sugar biosynthesis; ADP-L-glycero-beta-D-manno-heptose biosynthesis; ADP-L-glycero-beta-D-manno-heptose from D-glycero-beta-D-manno-heptose 7-phosphate: step 3/4. Its function is as follows. Catalyzes the phosphorylation of D-glycero-D-manno-heptose 7-phosphate at the C-1 position to selectively form D-glycero-beta-D-manno-heptose-1,7-bisphosphate. Functionally, catalyzes the ADP transfer from ATP to D-glycero-beta-D-manno-heptose 1-phosphate, yielding ADP-D-glycero-beta-D-manno-heptose. This chain is Bifunctional protein HldE, found in Paramagnetospirillum magneticum (strain ATCC 700264 / AMB-1) (Magnetospirillum magneticum).